The chain runs to 1657 residues: Endoribonuclease Dicer homolog 4 (1657 aa).

A compositionally biased stretch (low complexity) spans 1-14; it reads MGDAAAAAPAAAAA. Residues 1 to 26 form a disordered region; sequence MGDAAAAAPAAAAAGPSSTRGEPKDP. In terms of domain architecture, Helicase ATP-binding spans 37–214; the sequence is LCKRAVEENI…SHSFTEKGGR (178 aa). 50-57 is a binding site for ATP; sequence LGTGCGKT. The short motif at 157 to 160 is the DECH box element; the sequence is DECH. The Helicase C-terminal domain occupies 400-567; it reads NKFSVLINVL…TSNDMFDCLE (168 aa). Residues 585-675 form the Dicer dsRNA-binding fold domain; it reads SVSLLHCYCD…LPGPGSRKNK (91 aa). A PAZ domain is found at 856–978; that stretch reads DVSVHASYSS…LPPELCSLKV (123 aa). RNase III domains are found at residues 1010-1173 and 1214-1358; these read DVML…VEGG and IAGL…LDSG. Positions 1252, 1344, and 1347 each coordinate Mg(2+). One can recognise a DRBM 1 domain in the interval 1384–1451; that stretch reads NPMRELRELC…AQETLSKLKN (68 aa). The interval 1525-1556 is disordered; the sequence is GSGKHDVNNGRNNQPKLATQSGRLPSEATEKS. Over residues 1533–1547 the composition is skewed to polar residues; that stretch reads NGRNNQPKLATQSGR. The 77-residue stretch at 1569–1645 folds into the DRBM 2 domain; that stretch reads TARSFLFELC…AQGALWCLKQ (77 aa).

Belongs to the helicase family. Dicer subfamily. As to quaternary structure, may interact with ARGONAUTE1 or PINHEAD through their common PAZ domains. It depends on Mg(2+) as a cofactor. Mn(2+) serves as cofactor. In terms of tissue distribution, expressed in roots, leaf blades, leaf sheaths, shoot apices and spikelets.

It localises to the nucleus. Its function is as follows. Involved in the RNA silencing pathway. Cleaves double-stranded RNA to produce small interfering RNAs (siRNAs) which target the selective destruction of complementary RNAs. Required for the production of 21 nucleotide siRNAs. Regulates shoot apical meristem (SAM) initiation and maintenance, leaf polarization and lemma polarity through the trans-acting siRNAS (ta-siRNAs) pathway, which probably modulate the expression of the ARF2, ARF3, ARF4, ARF14 and ARF15 genes. Can process endogenous 21 nucleotide siRNAs derived from an imperfect inverted repeat. May not be involved in microRNAs (miRNAs) production. This Oryza sativa subsp. japonica (Rice) protein is Endoribonuclease Dicer homolog 4 (DCL4).